We begin with the raw amino-acid sequence, 189 residues long: Potassium-transporting ATPase KdpC subunit (189 aa).

A helical transmembrane segment spans residues 5–25 (LLPALTMLLVFTVITGIVYPL).

The protein belongs to the KdpC family. As to quaternary structure, the system is composed of three essential subunits: KdpA, KdpB and KdpC.

It is found in the cell membrane. Functionally, part of the high-affinity ATP-driven potassium transport (or Kdp) system, which catalyzes the hydrolysis of ATP coupled with the electrogenic transport of potassium into the cytoplasm. This subunit acts as a catalytic chaperone that increases the ATP-binding affinity of the ATP-hydrolyzing subunit KdpB by the formation of a transient KdpB/KdpC/ATP ternary complex. The sequence is that of Potassium-transporting ATPase KdpC subunit from Mycobacterium bovis (strain ATCC BAA-935 / AF2122/97).